The primary structure comprises 165 residues: uncharacterized protein (165 aa).

The helical transmembrane segment at 10-27 threads the bilayer; that stretch reads VSLTIVFVLFFSADVSLT.

The protein resides in the membrane. This is an uncharacterized protein from Saccharomyces cerevisiae (strain ATCC 204508 / S288c) (Baker's yeast).